The following is a 274-amino-acid chain: NADPH-dependent 7-cyano-7-deazaguanine reductase (274 aa).

80-82 provides a ligand contact to substrate; it reads VES. 82–83 contacts NADPH; sequence SK. The active-site Thioimide intermediate is cysteine 181. Aspartate 188 (proton donor) is an active-site residue. Residue 220–221 coordinates substrate; that stretch reads HE. 249 to 250 serves as a coordination point for NADPH; sequence RG.

This sequence belongs to the GTP cyclohydrolase I family. QueF type 2 subfamily. As to quaternary structure, homodimer.

It is found in the cytoplasm. The enzyme catalyses 7-aminomethyl-7-carbaguanine + 2 NADP(+) = 7-cyano-7-deazaguanine + 2 NADPH + 3 H(+). It functions in the pathway tRNA modification; tRNA-queuosine biosynthesis. Its function is as follows. Catalyzes the NADPH-dependent reduction of 7-cyano-7-deazaguanine (preQ0) to 7-aminomethyl-7-deazaguanine (preQ1). The protein is NADPH-dependent 7-cyano-7-deazaguanine reductase of Burkholderia multivorans (strain ATCC 17616 / 249).